Consider the following 309-residue polypeptide: Acetyl-coenzyme A carboxylase carboxyl transferase subunit beta (309 aa).

A CoA carboxyltransferase N-terminal domain is found at 27–296; the sequence is LWKKCPKCGA…PGTEAPIEFE (270 aa). The Zn(2+) site is built by Cys-31, Cys-34, Cys-50, and Cys-53. A C4-type zinc finger spans residues 31–53; sequence CPKCGAFLYKPELEKNLDVCPKC. The disordered stretch occupies residues 288 to 309; it reads GTEAPIEFEVTEKPDVDEPEGQ.

Belongs to the AccD/PCCB family. As to quaternary structure, acetyl-CoA carboxylase is a heterohexamer composed of biotin carboxyl carrier protein (AccB), biotin carboxylase (AccC) and two subunits each of ACCase subunit alpha (AccA) and ACCase subunit beta (AccD). Zn(2+) is required as a cofactor.

The protein localises to the cytoplasm. It catalyses the reaction N(6)-carboxybiotinyl-L-lysyl-[protein] + acetyl-CoA = N(6)-biotinyl-L-lysyl-[protein] + malonyl-CoA. It participates in lipid metabolism; malonyl-CoA biosynthesis; malonyl-CoA from acetyl-CoA: step 1/1. In terms of biological role, component of the acetyl coenzyme A carboxylase (ACC) complex. Biotin carboxylase (BC) catalyzes the carboxylation of biotin on its carrier protein (BCCP) and then the CO(2) group is transferred by the transcarboxylase to acetyl-CoA to form malonyl-CoA. The sequence is that of Acetyl-coenzyme A carboxylase carboxyl transferase subunit beta from Marinobacter nauticus (strain ATCC 700491 / DSM 11845 / VT8) (Marinobacter aquaeolei).